The following is a 315-amino-acid chain: tRNA-dihydrouridine(16) synthase (315 aa).

Residues 7–9 (PME) and Gln68 contribute to the FMN site. Catalysis depends on Cys98, which acts as the Proton donor. Residues Lys139, 199–201 (NGE), and 223–224 (GR) each bind FMN.

Belongs to the Dus family. DusC subfamily. FMN is required as a cofactor.

The catalysed reaction is 5,6-dihydrouridine(16) in tRNA + NADP(+) = uridine(16) in tRNA + NADPH + H(+). The enzyme catalyses 5,6-dihydrouridine(16) in tRNA + NAD(+) = uridine(16) in tRNA + NADH + H(+). Functionally, catalyzes the synthesis of 5,6-dihydrouridine (D), a modified base found in the D-loop of most tRNAs, via the reduction of the C5-C6 double bond in target uridines. Specifically modifies U16 in tRNAs. This Aquipseudomonas alcaligenes (Pseudomonas alcaligenes) protein is tRNA-dihydrouridine(16) synthase.